The chain runs to 142 residues: Putative pre-16S rRNA nuclease (142 aa).

It belongs to the YqgF nuclease family.

Its subcellular location is the cytoplasm. Its function is as follows. Could be a nuclease involved in processing of the 5'-end of pre-16S rRNA. The sequence is that of Putative pre-16S rRNA nuclease from Prosthecochloris aestuarii (strain DSM 271 / SK 413).